The primary structure comprises 121 residues: Small ribosomal subunit protein uS13 (121 aa).

Positions 94 to 121 (GLPVRGQNTKNNARTRKGPRRTVANKKK) are disordered. Basic residues predominate over residues 106–121 (ARTRKGPRRTVANKKK).

The protein belongs to the universal ribosomal protein uS13 family. In terms of assembly, part of the 30S ribosomal subunit. Forms a loose heterodimer with protein S19. Forms two bridges to the 50S subunit in the 70S ribosome.

Its function is as follows. Located at the top of the head of the 30S subunit, it contacts several helices of the 16S rRNA. In the 70S ribosome it contacts the 23S rRNA (bridge B1a) and protein L5 of the 50S subunit (bridge B1b), connecting the 2 subunits; these bridges are implicated in subunit movement. Contacts the tRNAs in the A and P-sites. This Anoxybacillus flavithermus (strain DSM 21510 / WK1) protein is Small ribosomal subunit protein uS13.